The chain runs to 328 residues: dITP/XTP pyrophosphatase (328 aa).

A unknown region spans residues 1–129 (MSEKIYEYKD…ATSEQGFGDT (129 aa)). An NTP pyrophosphatase region spans residues 130-324 (ILIATRNEGK…KLMEVFPAWQ (195 aa)). 134 to 139 (TRNEGK) is a binding site for substrate. The Proton acceptor role is filled by Asp-196. Residue Asp-196 coordinates Mg(2+). Substrate-binding positions include Ser-197, 280 to 283 (FGYD), Lys-303, and 308 to 309 (HR).

It belongs to the HAM1 NTPase family. Homodimer. It depends on Mg(2+) as a cofactor.

The catalysed reaction is XTP + H2O = XMP + diphosphate + H(+). The enzyme catalyses dITP + H2O = dIMP + diphosphate + H(+). It carries out the reaction ITP + H2O = IMP + diphosphate + H(+). Functionally, pyrophosphatase that catalyzes the hydrolysis of nucleoside triphosphates to their monophosphate derivatives, with a high preference for the non-canonical purine nucleotides XTP (xanthosine triphosphate), dITP (deoxyinosine triphosphate) and ITP. Seems to function as a house-cleaning enzyme that removes non-canonical purine nucleotides from the nucleotide pool, thus preventing their incorporation into DNA/RNA and avoiding chromosomal lesions. This chain is dITP/XTP pyrophosphatase, found in Streptococcus pyogenes serotype M18 (strain MGAS8232).